The primary structure comprises 215 residues: Methylthioribulose-1-phosphate dehydratase (215 aa).

Zn(2+)-binding residues include histidine 103 and histidine 105.

The protein belongs to the aldolase class II family. MtnB subfamily. Requires Zn(2+) as cofactor.

It catalyses the reaction 5-(methylsulfanyl)-D-ribulose 1-phosphate = 5-methylsulfanyl-2,3-dioxopentyl phosphate + H2O. Its pathway is amino-acid biosynthesis; L-methionine biosynthesis via salvage pathway; L-methionine from S-methyl-5-thio-alpha-D-ribose 1-phosphate: step 2/6. In terms of biological role, catalyzes the dehydration of methylthioribulose-1-phosphate (MTRu-1-P) into 2,3-diketo-5-methylthiopentyl-1-phosphate (DK-MTP-1-P). The polypeptide is Methylthioribulose-1-phosphate dehydratase (Sulfurihydrogenibium sp. (strain YO3AOP1)).